A 572-amino-acid chain; its full sequence is DNA polymerase (572 aa).

Residues 1-222 (MSRKMFSCDF…LPMDKEIRKA (222 aa)) are 3'-5' exonuclease and strand displacement activities. Residues 56 to 66 (YFHNLKFDGAF) are interaction with the primer terminal protein. Mg(2+) is bound by residues aspartate 142 and aspartate 166. Residues 223 to 226 (YRGG) are DNA-binding; Involved in the formation of a stable complex between TP and phi29 DNA polymerase. Residues 227 to 572 (FTWLNDKYKE…VLVDSVFTIK (346 aa)) form an initiation, polymerization and pyrophosphorolytic activities region. Mg(2+) contacts are provided by aspartate 246 and valine 247. 5-methyl-UTP is bound by residues tyrosine 251, lysine 368, and lysine 380. 2 residues coordinate Mg(2+): aspartate 453 and aspartate 455. Residue aspartate 455 participates in 5-methyl-UTP binding.

The protein belongs to the DNA polymerase type-B family. In terms of assembly, interacts with the primer terminal protein; this interaction allows the initiation of TP-primed DNA replication at both viral DNA ends. Interacts with DNA. Requires Mg(2+) as cofactor.

The enzyme catalyses DNA(n) + a 2'-deoxyribonucleoside 5'-triphosphate = DNA(n+1) + diphosphate. Polymerase responsible for protein-primed viral DNA replication by strand displacement with high processivity and fidelity. To start replication, the DNA polymerase forms a heterodimer with a free primer terminal protein (TP), recognizes the replication origins at both 5' ends of the linear chromosome, and initiates replication using as primer the OH-group of Ser-232 of the TP. This polymerase possesses three enzymatic activities: DNA synthesis (polymerase), primer terminal protein (TP) deoxynucleotidylation, which is the formation of a covalent linkage (phosphoester) between the hydroxyl group of a specific serine residue in TP and 5'-dAMP, a reaction directed by the second T at the 3' end, and 3' to 5' exonuclease activity. Exonuclease activity has a proofreading purpose. This chain is DNA polymerase (G), found in Bacillus phage M2 (Bacteriophage M2).